A 479-amino-acid chain; its full sequence is Endosomal/lysosomal proton channel TMEM175 (479 aa).

Residues 1 to 26 (MSGPQAPEPTLEGQADASAGSPDEDA) form a disordered region. At 1–33 (MSGPQAPEPTLEGQADASAGSPDEDAAEGIQHS) the chain is on the cytoplasmic side. The chain crosses the membrane as a helical span at residues 34–56 (HRMLSFSDALLSIIATVMEFDKS). Residues 35-41 (RMLSFSD) carry the RxxxFSD motif 1 motif. Residues 52–58 (EFDKSVQ) are short helix H2-1. At 57–64 (VQRLLATR) the chain is on the lumenal side. A helical membrane pass occupies residues 65 to 87 (IAVYLMTFLIVTVAWAAHTRLFQ). The Cytoplasmic portion of the chain corresponds to 88–93 (VVGKID). Residues 94-103 (DTLALLNLFS) traverse the membrane as a helical segment. Residues 104 to 113 (LMVTFPEVPL) lie on the Lumenal side of the membrane. Residues 114-135 (GIFLFCMCVIAIGAVQALIVLY) traverse the membrane as a helical segment. The Cytoplasmic segment spans residues 136-159 (AFHFPHLLSPQIERSAHRGLYRQR). The helical transmembrane segment at 160-180 (VLGIIVRGPALCLAAAGFSLF) threads the bilayer. At 181–185 (FYPAS) the chain is on the lumenal side. Residues 186–205 (YLLMAMVIVLPHVSKAAGWC) traverse the membrane as a helical segment. Over 206–232 (RAQLVGPREPPAHSVEVFTFDLHEPLS) the chain is Cytoplasmic. A helical transmembrane segment spans residues 233–257 (KERVEAFSDGVYAIVATLLILDICE). Residues 235-241 (RVEAFSD) carry the RxxxFSD motif 2 motif. Topologically, residues 258–284 (DNVPDAKDVKEKFQGSLVAALGESGPH) are lumenal. The tract at residues 263–271 (AKDVKEKFQ) is short helix H1-2. The segment at 273–279 (SLVAALG) is short helix H2-2. Residues 285-307 (FLAYFGSFATVGLLWFAHHSLFL) form a helical membrane-spanning segment. Residues 308 to 313 (HIRRAT) are Cytoplasmic-facing. The helical transmembrane segment at 314–335 (QPMGLLNTLSLAFVGGLPLAYQ) threads the bilayer. The Lumenal segment spans residues 336-350 (QTSAFTKQPRDELES). A helical membrane pass occupies residues 351-371 (VRISCAIIFLASIFQFAIWTT). The Cytoplasmic portion of the chain corresponds to 372-391 (ALLQEGETLQPSARFGGREH). Residues 392–415 (AFMFAKLALYPCASLLAFACTCVL) traverse the membrane as a helical segment. The Lumenal segment spans residues 416-417 (SS). Residues 418 to 444 (FSTAIFHAMQIAVPFAFLLLRLLVRLA) traverse the membrane as a helical segment. Over 445–479 (LAGLRALRGLVGPVLARPAPGAADEAQSPLLPAPC) the chain is Cytoplasmic.

This sequence belongs to the TMEM175 family. Homodimer. Interacts with AKT (AKT1, AKT2 or AKT3); leading to formation of the lysoK(GF) complex, which activates the channel. Interacts with LAMP1; inhibiting the proton channel activity of TMEM175. Interacts with LAMP2; inhibiting the proton channel activity of TMEM175.

Its subcellular location is the endosome membrane. The protein localises to the lysosome membrane. It carries out the reaction H(+)(in) = H(+)(out). The catalysed reaction is K(+)(in) = K(+)(out). With respect to regulation, active at low pH (under pH 4.6): proton channel activity is activated by luminal side protons. Polyunsaturated fatty acids, such as arachidonic acid, also activate the channel activity. Proton channel activity is directly inhibited by LAMP1 or LAMP2, facilitating lysosomal acidification. Channel activity is activated following interaction with AKT (AKT1, AKT2 or AKT3): interaction promotes activation from closed to an open state. Activation by AKT is independent of AKT serine/threonine-protein kinase activity. Functionally, proton-activated proton channel that catalyzes proton efflux from endosomes and lysosomes to maintain a steady-state pH. Activated at low pH (under pH 4.6) by luminal side protons: selectively mediates lysosomal proton release from lysosomes, eliciting a proton leak that balances V-ATPase activity to maintain pH homeostasis. Regulation of lumenal pH stability is required for autophagosome-lysosome fusion. Also acts as a potassium channel at higher pH, regulating potassium conductance in endosomes and lysosomes. Constitutes the pore-forming subunit of the lysoK(GF) complex, a complex activated by extracellular growth factors. The lysoK(GF) complex is composed of TMEM175 and AKT (AKT1, AKT2 or AKT3), a major target of growth factor receptors: in the complex, TMEM175 channel is opened by conformational changes by AKT, leading to its activation. The lysoK(GF) complex is required to protect neurons against stress-induced damage. This is Endosomal/lysosomal proton channel TMEM175 from Bos taurus (Bovine).